A 728-amino-acid polypeptide reads, in one-letter code: Beta-galactosidase 12 (728 aa).

The first 27 residues, 1–27, serve as a signal peptide directing secretion; the sequence is MGLNFREKAWILLGILCCSSLICSVKA. E185 acts as the Proton donor in catalysis. The Nucleophile role is filled by E254. N-linked (GlcNAc...) asparagine glycosylation is found at N255, N380, and N450.

Belongs to the glycosyl hydrolase 35 family. As to expression, ubiquitous, with higher expression levels in roots and siliques.

It localises to the secreted. The protein resides in the extracellular space. Its subcellular location is the apoplast. The enzyme catalyses Hydrolysis of terminal non-reducing beta-D-galactose residues in beta-D-galactosides.. The sequence is that of Beta-galactosidase 12 (BGAL12) from Arabidopsis thaliana (Mouse-ear cress).